Here is a 101-residue protein sequence, read N- to C-terminus: NAD(P)H-quinone oxidoreductase subunit 4L, chloroplastic (101 aa).

Transmembrane regions (helical) follow at residues 2–22, 32–52, and 61–81; these read ILEHVLVLSAYLFLIGLYGLI, MCLELILNAVNMNFVTFSDFF, and IFCIFVIAIAAAEAAIGLAIV.

The protein belongs to the complex I subunit 4L family. In terms of assembly, NDH is composed of at least 16 different subunits, 5 of which are encoded in the nucleus.

The protein resides in the plastid. It is found in the chloroplast thylakoid membrane. The catalysed reaction is a plastoquinone + NADH + (n+1) H(+)(in) = a plastoquinol + NAD(+) + n H(+)(out). The enzyme catalyses a plastoquinone + NADPH + (n+1) H(+)(in) = a plastoquinol + NADP(+) + n H(+)(out). Functionally, NDH shuttles electrons from NAD(P)H:plastoquinone, via FMN and iron-sulfur (Fe-S) centers, to quinones in the photosynthetic chain and possibly in a chloroplast respiratory chain. The immediate electron acceptor for the enzyme in this species is believed to be plastoquinone. Couples the redox reaction to proton translocation, and thus conserves the redox energy in a proton gradient. This Olimarabidopsis pumila (Dwarf rocket) protein is NAD(P)H-quinone oxidoreductase subunit 4L, chloroplastic.